A 552-amino-acid polypeptide reads, in one-letter code: Urocanate hydratase (552 aa).

NAD(+) is bound by residues 49 to 50, Q127, 173 to 175, D193, 239 to 240, 260 to 264, 270 to 271, and Y319; these read GG, GMG, NA, QTSAH, and YI. C407 is an active-site residue. G489 contributes to the NAD(+) binding site.

It belongs to the urocanase family. Requires NAD(+) as cofactor.

It localises to the cytoplasm. The enzyme catalyses 4-imidazolone-5-propanoate = trans-urocanate + H2O. It participates in amino-acid degradation; L-histidine degradation into L-glutamate; N-formimidoyl-L-glutamate from L-histidine: step 2/3. In terms of biological role, catalyzes the conversion of urocanate to 4-imidazolone-5-propionate. This is Urocanate hydratase from Bacillus cereus (strain 03BB102).